The primary structure comprises 490 residues: MIIETNQACDLVIFGTKGDLARRKLLPALYKLEKSQKIHPDTRIIGTGRADWNTEDYIKIVKKAIKMFLNEKIDEKIWKKLRSRLNFFYIDVFQDLHFLELKNILNQKKNIIIYYCAVPSNTFNAIFTGLGKVNLNSFPSRIIIEKPLGVSLETSKKINNQIAKYFLESQIFRIDHYLGKESILNLLALRFSNSFFFHSWNNKIIDHIQITVSEEVGIENRWNYFDQMGQTRDMVQNHLLQILTIVSMDKPKNITPEGIRDEKLKILRSLKKIDLNEIHIKTARGQYASGIINGKKVPSYIEENGANKHSKTETFVSIKVDINNDRWFGVPFYLRTGKRLAYKYSEIVIVFKKISKNLFQEFNKNLSPNKLIIRLEPNESIKIYFLNKVPGLSKEYKLKSDKMEFNFNINNTKNFVDAYERLLFESMRGIQSLFVCREEVEEAWKWIDPIINGWKKTNINTVQLYKSGTWGPKSSDEIIMRDGRFWETFN.

Residues Arg-49, 91–92, and Lys-146 each bind NADP(+); that span reads DV. Residues His-176, Lys-180, Glu-214, and Asp-233 each coordinate substrate. The active-site Proton acceptor is the His-238. Substrate is bound by residues Lys-338 and Lys-343.

It belongs to the glucose-6-phosphate dehydrogenase family.

It carries out the reaction D-glucose 6-phosphate + NADP(+) = 6-phospho-D-glucono-1,5-lactone + NADPH + H(+). The protein operates within carbohydrate degradation; pentose phosphate pathway; D-ribulose 5-phosphate from D-glucose 6-phosphate (oxidative stage): step 1/3. Its function is as follows. Catalyzes the oxidation of glucose 6-phosphate to 6-phosphogluconolactone. This Buchnera aphidicola subsp. Schizaphis graminum (strain Sg) protein is Glucose-6-phosphate 1-dehydrogenase.